The following is a 149-amino-acid chain: Urease accessory protein UreE (149 aa).

This sequence belongs to the UreE family.

The protein localises to the cytoplasm. Its function is as follows. Involved in urease metallocenter assembly. Binds nickel. Probably functions as a nickel donor during metallocenter assembly. This chain is Urease accessory protein UreE, found in Prochlorococcus marinus (strain MIT 9215).